Reading from the N-terminus, the 618-residue chain is Putative ATP-dependent DNA helicase Q1 (618 aa).

In terms of domain architecture, Helicase ATP-binding spans I95 to I270. L108–S115 lines the ATP pocket. A DEVH box motif is present at residues D214–H217. Residues C295–S443 form the Helicase C-terminal domain. 4 residues coordinate Zn(2+): C448, C466, C470, and C473. The tract at residues K586–L618 is disordered. Residues S603–L618 show a composition bias toward acidic residues.

This sequence belongs to the helicase family. RecQ subfamily. Zn(2+) is required as a cofactor.

It localises to the nucleus. The catalysed reaction is Couples ATP hydrolysis with the unwinding of duplex DNA by translocating in the 3'-5' direction.. The enzyme catalyses ATP + H2O = ADP + phosphate + H(+). Its function is as follows. DNA helicase that may play a role in the repair of DNA that is damaged by ultraviolet light or other mutagens. Exhibits a magnesium-dependent ATP-dependent DNA-helicase activity that unwinds single- and double-stranded DNA in a 3'-5' direction. In Caenorhabditis briggsae, this protein is Putative ATP-dependent DNA helicase Q1.